Here is a 101-residue protein sequence, read N- to C-terminus: Protein Tat (101 aa).

The disordered stretch occupies residues Met1–Thr20. The tract at residues Met1–Asn24 is interaction with human CREBBP. The interval Met1 to Gly48 is transactivation. Zn(2+) contacts are provided by Cys22, Cys25, and Cys27. Residues Cys22–Cys37 are cysteine-rich. Lys28 carries the N6-acetyllysine; by host PCAF modification. Zn(2+) contacts are provided by Cys30, His33, Cys34, and Cys37. A core region spans residues Phe38 to Gly48. The interval Gly48–Ala101 is disordered. The short motif at Lys49–Gly57 is the Nuclear localization signal, RNA-binding (TAR), and protein transduction element. The interaction with the host capping enzyme RNGTT stretch occupies residues Lys49 to Glu86. N6-acetyllysine; by host EP300 and GCN5L2 occurs at positions 50 and 51. Arg52 is subject to Asymmetric dimethylarginine; by host PRMT6. A Glycyl lysine isopeptide (Lys-Gly) (interchain with G-Cter in ubiquitin) cross-link involves residue Lys71. Residues Glu85–Ala101 are compositionally biased toward basic and acidic residues.

Belongs to the lentiviruses Tat family. Interacts with host CCNT1. Associates with the P-TEFb complex composed at least of Tat, P-TEFb (CDK9 and CCNT1), TAR RNA, RNA Pol II. Recruits the HATs CREBBP, TAF1/TFIID, EP300, PCAF and GCN5L2. Interacts with host KAT5/Tip60; this interaction targets the latter to degradation. Interacts with the host deacetylase SIRT1. Interacts with host capping enzyme RNGTT; this interaction stimulates RNGTT. Binds to host KDR, and to the host integrins ITGAV/ITGB3 and ITGA5/ITGB1. Interacts with host KPNB1/importin beta-1 without previous binding to KPNA1/importin alpha-1. Interacts with EIF2AK2. Interacts with host nucleosome assembly protein NAP1L1; this interaction may be required for the transport of Tat within the nucleus, since the two proteins interact at the nuclear rim. Interacts with host C1QBP/SF2P32; this interaction involves lysine-acetylated Tat. Interacts with the host chemokine receptors CCR2, CCR3 and CXCR4. Interacts with host DPP4/CD26; this interaction may trigger an anti-proliferative effect. Interacts with host LDLR. Interacts with the host extracellular matrix metalloproteinase MMP1. Interacts with host PRMT6; this interaction mediates Tat's methylation. Interacts with, and is ubiquitinated by MDM2/Hdm2. Interacts with host PSMC3 and HTATIP2. Interacts with STAB1; this interaction may overcome SATB1-mediated repression of IL2 and IL2RA (interleukin) in T cells by binding to the same domain than HDAC1. Interacts (when acetylated) with human CDK13, thereby increasing HIV-1 mRNA splicing and promoting the production of the doubly spliced HIV-1 protein Nef. Interacts with host TBP; this interaction modulates the activity of transcriptional pre-initiation complex. Interacts with host RELA. Interacts with host PLSCR1; this interaction negatively regulates Tat transactivation activity by altering its subcellular distribution. In terms of processing, asymmetrical arginine methylation by host PRMT6 seems to diminish the transactivation capacity of Tat and affects the interaction with host CCNT1. Post-translationally, acetylation by EP300, CREBBP, GCN5L2/GCN5 and PCAF regulates the transactivation activity of Tat. EP300-mediated acetylation of Lys-50 promotes dissociation of Tat from the TAR RNA through the competitive binding to PCAF's bromodomain. In addition, the non-acetylated Tat's N-terminus can also interact with PCAF. PCAF-mediated acetylation of Lys-28 enhances Tat's binding to CCNT1. Lys-50 is deacetylated by SIRT1. Polyubiquitination by host MDM2 does not target Tat to degradation, but activates its transactivation function and fosters interaction with CCNT1 and TAR RNA. In terms of processing, phosphorylated by EIF2AK2 on serine and threonine residues adjacent to the basic region important for TAR RNA binding and function. Phosphorylation of Tat by EIF2AK2 is dependent on the prior activation of EIF2AK2 by dsRNA.

It localises to the host nucleus. The protein resides in the host nucleolus. The protein localises to the host cytoplasm. Its subcellular location is the secreted. Its function is as follows. Transcriptional activator that increases RNA Pol II processivity, thereby increasing the level of full-length viral transcripts. Recognizes a hairpin structure at the 5'-LTR of the nascent viral mRNAs referred to as the transactivation responsive RNA element (TAR) and recruits the cyclin T1-CDK9 complex (P-TEFb complex) that will in turn hyperphosphorylate the RNA polymerase II to allow efficient elongation. The CDK9 component of P-TEFb and other Tat-activated kinases hyperphosphorylate the C-terminus of RNA Pol II that becomes stabilized and much more processive. Other factors such as HTATSF1/Tat-SF1, SUPT5H/SPT5, and HTATIP2 are also important for Tat's function. Besides its effect on RNA Pol II processivity, Tat induces chromatin remodeling of proviral genes by recruiting the histone acetyltransferases (HATs) CREBBP, EP300 and PCAF to the chromatin. This also contributes to the increase in proviral transcription rate, especially when the provirus integrates in transcriptionally silent region of the host genome. To ensure maximal activation of the LTR, Tat mediates nuclear translocation of NF-kappa-B by interacting with host RELA. Through its interaction with host TBP, Tat may also modulate transcription initiation. Tat can reactivate a latently infected cell by penetrating in it and transactivating its LTR promoter. In the cytoplasm, Tat is thought to act as a translational activator of HIV-1 mRNAs. In terms of biological role, extracellular circulating Tat can be endocytosed by surrounding uninfected cells via the binding to several surface receptors such as CD26, CXCR4, heparan sulfate proteoglycans (HSPG) or LDLR. Neurons are rarely infected, but they internalize Tat via their LDLR. Through its interaction with nuclear HATs, Tat is potentially able to control the acetylation-dependent cellular gene expression. Modulates the expression of many cellular genes involved in cell survival, proliferation or in coding for cytokines or cytokine receptors. Tat plays a role in T-cell and neurons apoptosis. Tat induced neurotoxicity and apoptosis probably contribute to neuroAIDS. Circulating Tat also acts as a chemokine-like and/or growth factor-like molecule that binds to specific receptors on the surface of the cells, affecting many cellular pathways. In the vascular system, Tat binds to ITGAV/ITGB3 and ITGA5/ITGB1 integrins dimers at the surface of endothelial cells and competes with bFGF for heparin-binding sites, leading to an excess of soluble bFGF. The chain is Protein Tat from Human immunodeficiency virus type 1 group M subtype A (isolate U455) (HIV-1).